A 326-amino-acid polypeptide reads, in one-letter code: tRNA uridine(34) hydroxylase (326 aa).

The region spanning 123–217 is the Rhodanese domain; it reads SDPDVLLVDT…YLEEVKQEES (95 aa). Residue Cys-177 is the Cysteine persulfide intermediate of the active site. The disordered stretch occupies residues 304 to 326; the sequence is VSQVILSRRTEKEDQRQAQNKKA.

The protein belongs to the TrhO family.

The enzyme catalyses uridine(34) in tRNA + AH2 + O2 = 5-hydroxyuridine(34) in tRNA + A + H2O. Catalyzes oxygen-dependent 5-hydroxyuridine (ho5U) modification at position 34 in tRNAs. The polypeptide is tRNA uridine(34) hydroxylase (Shewanella sediminis (strain HAW-EB3)).